The chain runs to 122 residues: Large ribosomal subunit protein uL18 (122 aa).

Positions 1–25 (MSTLSRKQQTQKRHRRLRRHLSGTA) are disordered. Over residues 9–21 (QTQKRHRRLRRHL) the composition is skewed to basic residues.

The protein belongs to the universal ribosomal protein uL18 family. In terms of assembly, part of the 50S ribosomal subunit; part of the 5S rRNA/L5/L18/L25 subcomplex. Contacts the 5S and 23S rRNAs.

In terms of biological role, this is one of the proteins that bind and probably mediate the attachment of the 5S RNA into the large ribosomal subunit, where it forms part of the central protuberance. The protein is Large ribosomal subunit protein uL18 of Synechococcus sp. (strain CC9311).